A 231-amino-acid chain; its full sequence is Orotate phosphoribosyltransferase (231 aa).

5-phospho-alpha-D-ribose 1-diphosphate-binding positions include K27, 79–80 (YK), R106, K107, K110, H112, and 133–141 (DDVMTAGTA). The orotate site is built by T137 and R166.

It belongs to the purine/pyrimidine phosphoribosyltransferase family. PyrE subfamily. As to quaternary structure, homodimer. Mg(2+) serves as cofactor.

It carries out the reaction orotidine 5'-phosphate + diphosphate = orotate + 5-phospho-alpha-D-ribose 1-diphosphate. Its pathway is pyrimidine metabolism; UMP biosynthesis via de novo pathway; UMP from orotate: step 1/2. Its function is as follows. Catalyzes the transfer of a ribosyl phosphate group from 5-phosphoribose 1-diphosphate to orotate, leading to the formation of orotidine monophosphate (OMP). The polypeptide is Orotate phosphoribosyltransferase (Bifidobacterium longum (strain NCC 2705)).